The primary structure comprises 307 residues: MRVRVAARGSRLSLLQVEQALEELSRYAGVSMHWEVVRVKSAGDVWSDRPLESIGVVGVFTREVDRAVASGAADIAVHSLKDMPTSGYGGPLKIVYIASRPSARDALISRQGPGRVEDLEPGSTLGTSSARRRALSLHYNPRIRVENLRGNLDTRLRKLREGLYDAIIASEAGLIRLGVDVEYTPLDPSYFPPAPGQGFVAVVARVGSNVEKMLRDLDKPPWWHVAWAERGVLEGARAGCRTPVAAYAEPLGRSMVRVTAAALSPDGSRAYWARAEGRIEEARRIGVSLGEELSRVVEGWHKTGGGS.

Cys-240 carries the post-translational modification S-(dipyrrolylmethanemethyl)cysteine.

The protein belongs to the HMBS family. The cofactor is dipyrromethane.

The catalysed reaction is 4 porphobilinogen + H2O = hydroxymethylbilane + 4 NH4(+). Its pathway is porphyrin-containing compound metabolism; protoporphyrin-IX biosynthesis; coproporphyrinogen-III from 5-aminolevulinate: step 2/4. In terms of biological role, tetrapolymerization of the monopyrrole PBG into the hydroxymethylbilane pre-uroporphyrinogen in several discrete steps. The polypeptide is Probable porphobilinogen deaminase (hemC) (Aeropyrum pernix (strain ATCC 700893 / DSM 11879 / JCM 9820 / NBRC 100138 / K1)).